Here is a 69-residue protein sequence, read N- to C-terminus: Sec-independent protein translocase protein TatA (69 aa).

The chain crosses the membrane as a helical span at residues M1 to G21.

It belongs to the TatA/E family. In terms of assembly, the Tat system comprises two distinct complexes: a TatABC complex, containing multiple copies of TatA, TatB and TatC subunits, and a separate TatA complex, containing only TatA subunits. Substrates initially bind to the TatABC complex, which probably triggers association of the separate TatA complex to form the active translocon.

It localises to the cell inner membrane. In terms of biological role, part of the twin-arginine translocation (Tat) system that transports large folded proteins containing a characteristic twin-arginine motif in their signal peptide across membranes. TatA could form the protein-conducting channel of the Tat system. The chain is Sec-independent protein translocase protein TatA from Vesicomyosocius okutanii subsp. Calyptogena okutanii (strain HA).